The sequence spans 247 residues: Phosphoribosylaminoimidazole-succinocarboxamide synthase (247 aa).

Belongs to the SAICAR synthetase family.

It carries out the reaction 5-amino-1-(5-phospho-D-ribosyl)imidazole-4-carboxylate + L-aspartate + ATP = (2S)-2-[5-amino-1-(5-phospho-beta-D-ribosyl)imidazole-4-carboxamido]succinate + ADP + phosphate + 2 H(+). The protein operates within purine metabolism; IMP biosynthesis via de novo pathway; 5-amino-1-(5-phospho-D-ribosyl)imidazole-4-carboxamide from 5-amino-1-(5-phospho-D-ribosyl)imidazole-4-carboxylate: step 1/2. This chain is Phosphoribosylaminoimidazole-succinocarboxamide synthase, found in Methanopyrus kandleri (strain AV19 / DSM 6324 / JCM 9639 / NBRC 100938).